Consider the following 440-residue polypeptide: L-gulonolactone oxidase (440 aa).

Residues 17–187 enclose the FAD-binding PCMH-type domain; sequence YSCEPELYFE…LNVTIQCVPA (171 aa). Residue His-54 is modified to Pros-8alpha-FAD histidine. The helical transmembrane segment at 245–267 threads the bilayer; it reads WFWNYAIGYYLLEFLLWISVFVP.

It belongs to the oxygen-dependent FAD-linked oxidoreductase family. The cofactor is FAD.

Its subcellular location is the microsome membrane. It localises to the endoplasmic reticulum membrane. It catalyses the reaction L-gulono-1,4-lactone + O2 = L-ascorbate + H2O2 + H(+). The protein operates within cofactor biosynthesis; L-ascorbate biosynthesis via UDP-alpha-D-glucuronate pathway; L-ascorbate from UDP-alpha-D-glucuronate: step 4/4. In terms of biological role, oxidizes L-gulono-1,4-lactone to hydrogen peroxide and L-xylo-hexulonolactone which spontaneously isomerizes to L-ascorbate. The polypeptide is L-gulonolactone oxidase (GULO) (Scyliorhinus torazame (Cloudy catshark)).